Here is a 163-residue protein sequence, read N- to C-terminus: Putative 4-hydroxy-4-methyl-2-oxoglutarate aldolase (163 aa).

Substrate-binding positions include 76–79 (GDML) and Arg98. A divalent metal cation is bound at residue Asp99.

Belongs to the class II aldolase/RraA-like family. Homotrimer. Requires a divalent metal cation as cofactor.

It carries out the reaction 4-hydroxy-4-methyl-2-oxoglutarate = 2 pyruvate. The catalysed reaction is oxaloacetate + H(+) = pyruvate + CO2. In terms of biological role, catalyzes the aldol cleavage of 4-hydroxy-4-methyl-2-oxoglutarate (HMG) into 2 molecules of pyruvate. Also contains a secondary oxaloacetate (OAA) decarboxylase activity due to the common pyruvate enolate transition state formed following C-C bond cleavage in the retro-aldol and decarboxylation reactions. This Pseudomonas putida (strain W619) protein is Putative 4-hydroxy-4-methyl-2-oxoglutarate aldolase.